The chain runs to 158 residues: Inner membrane assembly complex subunit 17 (158 aa).

A mitochondrion-targeting transit peptide spans 1 to 15; the sequence is MFRPLVKRVVTRRFL. Topologically, residues 16-85 are mitochondrial matrix; sequence AAANNSNAHI…KTQETSLKKF (70 aa). The helical transmembrane segment at 86-108 threads the bilayer; the sequence is VRPAWIFLLMGSIVYLSCHYVWW. The Mitochondrial intermembrane segment spans residues 109–158; sequence KLDYEEKELEYTHKVHQLESELAALNEAHNSSVSSDKNSKRSSRKWYKFW. Positions 110–140 form a coiled coil; that stretch reads LDYEEKELEYTHKVHQLESELAALNEAHNSS.

This sequence belongs to the INA17 family. Component of the inner membrane assembly (INA) complex, composed of INA17 and INA22. Interacts with a subset of F(1)F(0)-ATP synthase subunits of the F(1)-domain and the peripheral stalk.

Its subcellular location is the mitochondrion inner membrane. Its function is as follows. Component of the INA complex (INAC) that promotes the biogenesis of mitochondrial F(1)F(0)-ATP synthase. INAC facilitates the assembly of the peripheral stalk and promotes the assembly of the catalytic F(1)-domain with the membrane-embedded F(0)-domain. The polypeptide is Inner membrane assembly complex subunit 17 (Kluyveromyces lactis (strain ATCC 8585 / CBS 2359 / DSM 70799 / NBRC 1267 / NRRL Y-1140 / WM37) (Yeast)).